A 251-amino-acid chain; its full sequence is Small ribosomal subunit protein uS3 (251 aa).

Residues 39–112 (IRKYINEVYA…NIILNVVEVR (74 aa)) form the KH type-2 domain. Residues 222–251 (EEKKPAKKFNKKPVAAKPANKEEKSSKEVK) form a disordered region. The span at 240–251 (ANKEEKSSKEVK) shows a compositional bias: basic and acidic residues.

This sequence belongs to the universal ribosomal protein uS3 family. In terms of assembly, part of the 30S ribosomal subunit. Forms a tight complex with proteins S10 and S14.

Functionally, binds the lower part of the 30S subunit head. Binds mRNA in the 70S ribosome, positioning it for translation. This Anaeroplasma abactoclasticum protein is Small ribosomal subunit protein uS3.